We begin with the raw amino-acid sequence, 1238 residues long: Virulence sensor protein BvgS (1238 aa).

Positions 1–32 are cleaved as a signal peptide; sequence MPAPHRLYPRSLICLAQALLVWALLAWAPAQA. The Cytoplasmic portion of the chain corresponds to 33-307; it reads SQELTLVGKA…REQQWMANHP (275 aa). Residues 308–331 traverse the membrane as a helical segment; sequence VVKVAVLNLFAPFTLFRTDEQFGG. Topologically, residues 332–541 are periplasmic; sequence ISAAVLQLLQ…PRTWYAYRNE (210 aa). The helical transmembrane segment at 542–563 threads the bilayer; that stretch reads IYLLIGLGLLSALLFLSWIVYL. The Cytoplasmic segment spans residues 564 to 1238; that stretch reads RRQIRQRKRA…LEQRPHQGQP (675 aa). One can recognise a PAS domain in the interval 580–651; sequence QLEFMRVLID…MHEFLLTRMA (72 aa). One can recognise a PAC domain in the interval 652–708; it reads AEREPRFEDRDVTLHGRTRHVYQWTVPYGDSLGELKGIIGGWIDITERAELLRELHD. Residues 726-948 enclose the Histidine kinase domain; sequence TMSHEIRTPM…TVSVDLRLTM (223 aa). Residue histidine 729 is modified to Phosphohistidine; by autocatalysis. In terms of domain architecture, Response regulatory spans 974–1095; the sequence is RVLVVDDHKP…ALRQRLNEAA (122 aa). Aspartate 1023 carries the post-translational modification 4-aspartylphosphate. Residues 1133-1228 enclose the HPt domain; sequence DEALIRQLLE…AALETQLRAW (96 aa). Histidine 1172 bears the Phosphohistidine mark.

Activation requires a sequential transfer of a phosphate group from a His in the primary transmitter domain, to an Asp in the receiver domain and to a His in the secondary transmitter domain.

Its subcellular location is the cell inner membrane. It catalyses the reaction ATP + protein L-histidine = ADP + protein N-phospho-L-histidine.. Member of the two-component regulatory system BvgS/BvgA. Phosphorylates BvgA via a four-step phosphorelay in response to environmental signals. This chain is Virulence sensor protein BvgS (bvgS), found in Bordetella parapertussis (strain 12822 / ATCC BAA-587 / NCTC 13253).